A 130-amino-acid chain; its full sequence is Small ribosomal subunit protein uS9 (130 aa).

A disordered region spans residues 102-130; sequence GLLTRDSRMKERKKPGLKGARRAPQFSKR. Basic residues predominate over residues 111 to 130; sequence KERKKPGLKGARRAPQFSKR.

This sequence belongs to the universal ribosomal protein uS9 family.

This is Small ribosomal subunit protein uS9 from Listeria monocytogenes serovar 1/2a (strain ATCC BAA-679 / EGD-e).